The sequence spans 490 residues: Cytochrome P450 2C7 (490 aa).

Arginine 144 is subject to Dimethylated arginine. Cysteine 435 contributes to the heme binding site.

This sequence belongs to the cytochrome P450 family. Requires heme as cofactor.

It is found in the endoplasmic reticulum membrane. It localises to the microsome membrane. The catalysed reaction is an organic molecule + reduced [NADPH--hemoprotein reductase] + O2 = an alcohol + oxidized [NADPH--hemoprotein reductase] + H2O + H(+). Functionally, cytochromes P450 are a group of heme-thiolate monooxygenases. In liver microsomes, this enzyme is involved in an NADPH-dependent electron transport pathway. It oxidizes a variety of structurally unrelated compounds, including steroids, fatty acids, and xenobiotics. The sequence is that of Cytochrome P450 2C7 (Cyp2c7) from Rattus norvegicus (Rat).